Here is a 303-residue protein sequence, read N- to C-terminus: D-alanine--D-alanine ligase (303 aa).

The ATP-grasp domain occupies T99–K293. G125 to T176 serves as a coordination point for ATP. The Mg(2+) site is built by D248, E260, and N262.

This sequence belongs to the D-alanine--D-alanine ligase family. Requires Mg(2+) as cofactor. It depends on Mn(2+) as a cofactor.

The protein resides in the cytoplasm. The catalysed reaction is 2 D-alanine + ATP = D-alanyl-D-alanine + ADP + phosphate + H(+). It functions in the pathway cell wall biogenesis; peptidoglycan biosynthesis. In terms of biological role, cell wall formation. The sequence is that of D-alanine--D-alanine ligase from Thermotoga petrophila (strain ATCC BAA-488 / DSM 13995 / JCM 10881 / RKU-1).